Reading from the N-terminus, the 254-residue chain is Phosphatidylglycerol--prolipoprotein diacylglyceryl transferase (254 aa).

The next 4 helical transmembrane spans lie at 11–31 (LAIRWYGVIISMGTALGLLLA), 49–69 (FLIAFPSAIIGARLYYVIFEF), 84–104 (QGGLAIHGGIIFGVLAVYIYL), and 109–129 (ESFFEYVDVAAPSIILGQAIG). Arg-130 contacts a 1,2-diacyl-sn-glycero-3-phospho-(1'-sn-glycerol). Transmembrane regions (helical) follow at residues 169 to 189 (PTFLYESIWNFIICIFLVYLL), 196 to 216 (GIVFMAYIGLYSLGRFFIEGL), and 228 to 248 (VAQLISVLGIILSIFFIYNII).

This sequence belongs to the Lgt family.

Its subcellular location is the cell membrane. It carries out the reaction L-cysteinyl-[prolipoprotein] + a 1,2-diacyl-sn-glycero-3-phospho-(1'-sn-glycerol) = an S-1,2-diacyl-sn-glyceryl-L-cysteinyl-[prolipoprotein] + sn-glycerol 1-phosphate + H(+). It functions in the pathway protein modification; lipoprotein biosynthesis (diacylglyceryl transfer). Its function is as follows. Catalyzes the transfer of the diacylglyceryl group from phosphatidylglycerol to the sulfhydryl group of the N-terminal cysteine of a prolipoprotein, the first step in the formation of mature lipoproteins. In Clostridium botulinum (strain ATCC 19397 / Type A), this protein is Phosphatidylglycerol--prolipoprotein diacylglyceryl transferase.